We begin with the raw amino-acid sequence, 252 residues long: Intraflagellar transport associated protein 2 (252 aa).

Residues 35–42 and 118–125 contribute to the GTP site; these read GPPKAGKT and WDVSGDKK.

Belongs to the small GTPase superfamily. Rab family. As to quaternary structure, component of the IFT complex B composed of at least che-2, che-13, dyf-1, dyf-3, dyf-6, dyf-11, dyf-13, ift-20, ift-74, ift-81, ifta-2, osm-1, osm-5 and osm-6. As to expression, ciliated sensory neurons.

The protein resides in the cytoplasm. It is found in the cytoskeleton. The protein localises to the cilium axoneme. Component of the intraflagellar transport (IFT) complex B required for transport of proteins in the motile cilium. May be required for ciliary entrance and transport of specific ciliary cargo proteins such as che-3 which are related to motility. Regulates specific signaling activities in the cilia, such as the daf-2/insulin receptor-like transduction pathway. The protein is Intraflagellar transport associated protein 2 of Caenorhabditis elegans.